Here is a 776-residue protein sequence, read N- to C-terminus: Angiomotin-like protein 2 (776 aa).

Positions 41 to 88 are disordered; the sequence is GGAGAGGTGSPQASAEILAPEDTQVLQQATRQEPQGQEHQGGESHLAE. The tract at residues 101 to 307 is required for interaction with CDH5; sequence GEELPTYEEA…STQTSSAPSG (207 aa). The residue at position 107 (Y107) is a Phosphotyrosine. 3 disordered regions span residues 119 to 142, 169 to 215, and 283 to 309; these read AQQA…GHRS, RNGA…QYPH, and GPLG…SGSA. Polar residues predominate over residues 177–192; it reads HMSSSHSFPQLARNQQ. A compositionally biased stretch (pro residues) spans 196–213; that stretch reads PRGPPAEGPEPRGPPPQY. Residues 220–307 form a required for interaction with CDH1 region; sequence HETATAVTDP…STQTSSAPSG (88 aa). A compositionally biased stretch (polar residues) spans 297 to 306; it reads ASTQTSSAPS. Coiled-coil stretches lie at residues 314–509 and 543–570; these read METL…LELR and ALRL…WEQK. Residues K347 and K408 each participate in a glycyl lysine isopeptide (Lys-Gly) (interchain with G-Cter in ubiquitin) cross-link. Disordered regions lie at residues 591–620 and 677–743; these read QRDT…GHRH and TQGW…LDPD. A compositionally biased stretch (polar residues) spans 678–687; that stretch reads QGWQSLSSSE. Residues S756 and S759 each carry the phosphoserine modification. The short motif at 773-776 is the PDZ-binding element; the sequence is EILI.

The protein belongs to the angiomotin family. As to quaternary structure, part of a complex composed of AMOTL2, MAGI1 and CDH5, within the complex AMOTL2 acts as a scaffold protein for the interaction of MAGI1 with CDH5. The complex is required for coupling actin fibers to cell junctions in endothelial cells. Within the complex AMOTL2 (via its N-terminus) interacts with CDH5. Interacts (via N-terminus) with MAGI1. Interacts (via N-terminus) with ACTB; the interaction facilitates binding of cell junction complexes to actin fibers in endothelial cells. Interacts with CDH1; the interaction may facilitate binding of radial actin fibers to cell junction complexes. Interacts with SRC. Interacts with YAP1; the interaction is required for ubiquitination of AMOTL2 and localization of YAP1 to tight junctions. Interacts with WWP1; the interaction facilitates WWP1 interaction with the Crumbs complex and subsequent WWP1 translocation to the plasma membrane. WPP1 interaction with the Crumbs complex promotes WPP1 monoubiquitination of AMOTL2 which subsequently activates the Hippo signaling pathway. When ubiquitinated interacts with LATS2 (via UBA domain); the interaction promotes LATS2 phosphorylation of YAP1. Interacts (via PPXY motif) with WWTR1/TAZ (via WW domain); the interaction promotes WWTR1/TAZ localization to the cytoplasm and thereby inhibition of its transcriptional properties. Interacts with PHLDB2; interaction may facilitate PHLDB2 localization to the myotube podosome cortex that surrounds the core. In terms of processing, monoubiquitinated at Lys-347 and Lys-408 by Crumbs complex-bound WWP1. De-ubiquitinated at Lys-347 and Lys-408 by USP9X; the interaction may be promoted by cell contact inhibition. Deubiquitination of AMOTL2 negatively regulates Hippo signaling activation. Post-translationally, phosphorylation at Tyr-107 is necessary for efficient binding to SRC and synergistically functioning with SRC to activate the downstream MAPK pathway.

The protein localises to the recycling endosome. The protein resides in the cytoplasm. It localises to the cell projection. It is found in the podosome. Its subcellular location is the cell junction. In terms of biological role, regulates the translocation of phosphorylated SRC to peripheral cell-matrix adhesion sites. Required for proper architecture of actin filaments. Plays a role in coupling actin fibers to cell junctions in endothelial cells and is therefore required for correct endothelial cell morphology via facilitating transcellular transmission of mechanical force resulting in endothelial cell elongation. Required for the anchoring of radial actin fibers to CDH1 junction complexes at the cell membrane which facilitates organization of radial actin fiber structure and cellular response to contractile forces. This contributes to maintenance of cell area, size, shape, epithelial sheet organization and trophectoderm cell properties that facilitate blastocyst zona hatching. Inhibits the Wnt/beta-catenin signaling pathway, probably by recruiting CTNNB1 to recycling endosomes and hence preventing its translocation to the nucleus. Participates in angiogenesis. Activates the Hippo signaling pathway in response to cell contact inhibition via interaction with and ubiquitination by Crumbs complex-bound WWP1. Ubiquitinated AMOTL2 then interacts with LATS2 which in turn phosphorylates YAP1, excluding it from the nucleus and localizing it to the cytoplasm and tight junctions, therefore ultimately repressing YAP1-driven transcription of target genes. Acts to inhibit WWTR1/TAZ transcriptional coactivator activity via sequestering WWTR1/TAZ in the cytoplasm and at tight junctions. Regulates the size and protein composition of the podosome cortex and core at myofibril neuromuscular junctions. Selectively promotes FGF-induced MAPK activation through SRC. May play a role in the polarity, proliferation and migration of endothelial cells. This Canis lupus familiaris (Dog) protein is Angiomotin-like protein 2.